A 211-amino-acid polypeptide reads, in one-letter code: NADH-quinone oxidoreductase subunit I (211 aa).

The segment at 21–41 (PTTEQYPEQKKETAPRFHGRH) is disordered. 4Fe-4S ferredoxin-type domains lie at 43-73 (LNRH…VEGA) and 89-118 (RVYQ…MSND). [4Fe-4S] cluster is bound by residues Cys53, Cys56, Cys59, Cys63, Cys98, Cys101, Cys104, and Cys108. A disordered region spans residues 141-211 (RAGMESPPHP…AHGAGSERPR (71 aa)). The segment covering 152–166 (RLGESETDYYTRDPD) has biased composition (basic and acidic residues). Acidic residues predominate over residues 179–191 (DEADEAGEAGEAG). Basic and acidic residues predominate over residues 192 to 211 (EAERAADKVPAHGAGSERPR).

It belongs to the complex I 23 kDa subunit family. As to quaternary structure, NDH-1 is composed of 14 different subunits. Subunits NuoA, H, J, K, L, M, N constitute the membrane sector of the complex. It depends on [4Fe-4S] cluster as a cofactor.

The protein resides in the cell membrane. The catalysed reaction is a quinone + NADH + 5 H(+)(in) = a quinol + NAD(+) + 4 H(+)(out). NDH-1 shuttles electrons from NADH, via FMN and iron-sulfur (Fe-S) centers, to quinones in the respiratory chain. The immediate electron acceptor for the enzyme in this species is believed to be ubiquinone. Couples the redox reaction to proton translocation (for every two electrons transferred, four hydrogen ions are translocated across the cytoplasmic membrane), and thus conserves the redox energy in a proton gradient. This is NADH-quinone oxidoreductase subunit I from Parafrankia sp. (strain EAN1pec).